The following is a 267-amino-acid chain: Thyroxine 5-deiodinase (267 aa).

At methionine 1–histidine 15 the chain is on the cytoplasmic side. A helical; Signal-anchor for type II membrane protein membrane pass occupies residues alanine 16 to leucine 36. Residues aspartate 37–valine 267 lie on the Extracellular side of the membrane. Residue selenocysteine 131 is part of the active site. A non-standard amino acid (selenocysteine) is located at residue selenocysteine 131.

This sequence belongs to the iodothyronine deiodinase family. In terms of assembly, monomer. Homodimer. May undergo minor heretodimerization with DIO1 and DIO2.

The protein localises to the cell membrane. Its subcellular location is the endosome membrane. It carries out the reaction 3,3',5'-triiodo-L-thyronine + iodide + A + H(+) = L-thyroxine + AH2. It catalyses the reaction 3,3'-diiodo-L-thyronine + iodide + A + H(+) = 3,3',5-triiodo-L-thyronine + AH2. The catalysed reaction is 3-iodo-L-thyronine + iodide + A + H(+) = 3,5-diiodo-L-thyronine + AH2. The enzyme catalyses L-thyronine + iodide + A + H(+) = 3-iodo-L-thyronine + AH2. It carries out the reaction 3',5'-diiodo-L-thyronine + iodide + A + H(+) = 3,3',5'-triiodo-L-thyronine + AH2. It catalyses the reaction 3'-iodo-L-thyronine + iodide + A + H(+) = 3,3'-diiodo-L-thyronine + AH2. The catalysed reaction is 3,3',5'-triiodothyronamine + iodide + A + H(+) = 3,3',5,5'-tetraiodothyronamine + AH2. The enzyme catalyses 3',5'-diiodothyronamine + iodide + A + H(+) = 3,3',5'-triiodothyronamine + AH2. It carries out the reaction 3,3'-diiodothyronamine + iodide + A + H(+) = 3,3',5-triiodothyronamine + AH2. It catalyses the reaction 3-iodothyronamine + iodide + A + H(+) = 3,5-diiodothyronamine + AH2. The catalysed reaction is 3'-iodothyronamine + iodide + A + H(+) = 3,3'-diiodothyronamine + AH2. The enzyme catalyses thyronamine + iodide + A + H(+) = 3-iodothyronamine + AH2. Its function is as follows. Plays a crucial role in the metabolism of thyroid hormones (TH) and has specific roles in TH activation and inactivation by deiodination. Catalyzes the deiodination of L-thyroxine (T4) to 3,3',5'-triiodothyronine (rT3), 3,5,3'-triiodothyronine (T3) to 3,3'-diiodothyronine (3,3'-T2), 3,5-diiodothyronine (3,5-T2) to 3-monoiodothyronine (3-T1), rT3 to 3',5'-diiodothyronine (3',5'-T2) and 3,3'-T2 to 3'-monoiodothyronine (3'-T1) via inner-ring deiodination (IRD). Catalyzes the deiodination of 3-T1 to L-thyronine (T0) via outer-ring deiodination (ORD). Catalyzes the tyrosyl ring deiodinations of 3,3',5,5'-tetraiodothyronamine, 3,3',5'-triiodothyronamine, 3,5,3'-triiodothyronamine, 3,5-diiodothyronamine, 3,3'-diiodothyronamine and 3-iodothyronamine. The polypeptide is Thyroxine 5-deiodinase (dio3) (Sparus aurata (Gilthead sea bream)).